A 1453-amino-acid chain; its full sequence is Collagen alpha-1(I) chain (1453 aa).

The N-terminal stretch at 1–22 (MFSFVDLRLLLLLGATALLTHG) is a signal peptide. A propeptide spans 23–151 (QEDIPEVSCI…PPGLGGNFAS (129 aa)) (N-terminal propeptide). Positions 29 to 87 (VSCIHNGLRVPNGETWKPDVCLICICHNGTAVCDGVLCKEDLDCPNPQKREGECCPFCP) constitute a VWFC domain. Asparagine 56 carries an N-linked (GlcNAc...) asparagine glycan. Residues 97–1206 (VIGVEGPKGD…KSQDGGRYYR (1110 aa)) form a disordered region. Pro residues-rich tracts occupy residues 109-118 (PQGPRGPVGP) and 128-143 (PGLP…PGPP). Residue glutamine 152 is modified to Pyrrolidone carboxylic acid. The segment at 152 to 167 (QMSYGYDEKSAGVSVP) is nonhelical region (N-terminal). Lysine 160 bears the Allysine mark. Serine 161 is modified (phosphoserine). A triple-helical region region spans residues 168–1181 (GPMGPSGPRG…PGPPGPPGPP (1014 aa)). Residues proline 179, proline 182, proline 185, proline 194, proline 197, proline 200, proline 215, proline 230, proline 236, proline 245, and proline 251 each carry the 4-hydroxyproline modification. Low complexity predominate over residues 187 to 206 (PQGFQGPPGEPGEPGASGPM). Over residues 218–232 (NGDDGEAGKPGRPGE) the composition is skewed to basic and acidic residues. Lysine 254 bears the 5-hydroxylysine; alternate mark. A glycan (O-linked (Gal...) hydroxylysine; alternate) is linked at lysine 254. Serine 260 carries the phosphoserine modification. Residues proline 278, proline 281, proline 287, proline 296, and proline 302 each carry the 4-hydroxyproline modification. Positions 307–320 (SAGARGNDGAVGAA) are enriched in low complexity. The segment covering 322-334 (PPGPTGPTGPPGF) has biased composition (pro residues). Proline 323, proline 332, proline 335, proline 362, proline 365, proline 377, proline 383, proline 392, proline 398, proline 401, and proline 416 each carry 4-hydroxyproline. Residues 335-361 (PGAAGAKGEAGPQGARGSEGPQGVRGE) show a composition bias toward low complexity. Positions 368–418 (AGAAGPAGNPGADGQPGAKGANGAPGIAGAPGFPGARGPSGPQGPSGAPGP) are enriched in low complexity. Position 419 is a 5-hydroxylysine (lysine 419). 8 positions are modified to 4-hydroxyproline: proline 425, proline 428, proline 440, proline 449, proline 464, proline 470, proline 479, and proline 485. The segment covering 474–483 (GERGGPGSRG) has biased composition (gly residues). The residue at position 494 (lysine 494) is a 5-hydroxylysine. Residues proline 503, proline 512, proline 518, proline 524, proline 533, proline 536, proline 545, proline 554, proline 560, proline 572, proline 581, proline 590, proline 593, proline 611, proline 629, proline 635, proline 641, proline 647, proline 653, proline 659, proline 671, proline 680, proline 692, proline 704, proline 707, proline 713, proline 719, and proline 728 each carry the 4-hydroxyproline modification. Positions 527–566 (KGLTGSPGSPGPDGKTGPPGPAGQDGRPGPAGPPGARGQA) are enriched in low complexity. Low complexity predominate over residues 623–650 (QGPAGSPGFQGLPGPAGPPGEAGKPGEQ). Low complexity-rich tracts occupy residues 685–695 (PRGNNGAPGND) and 703–716 (APGA…PGLQ). Positions 734-736 (RGD) match the Cell attachment site motif. Lysine 740 bears the 5-hydroxylysine mark. Proline 746, proline 761, and proline 767 each carry 4-hydroxyproline. Over residues 773–787 (TGPSGPAGPTGARGA) the composition is skewed to low complexity. The residue at position 776 (serine 776) is a Phosphoserine. Residues proline 788, proline 794, proline 797, proline 806, proline 812, proline 830, proline 839, and proline 848 each carry the 4-hydroxyproline modification. The segment covering 800–815 (AGFAGPPGADGQPGAK) has biased composition (low complexity). Positions 829–841 (PPGPAGPAGPPGP) are enriched in pro residues. Over residues 842-872 (IGNVGAPGPKGSRGAAGPPGATGFPGAAGRV) the composition is skewed to low complexity. Lysine 851 is modified (5-hydroxylysine). 4-hydroxyproline is present on residues proline 860 and proline 866. Residue proline 874 is modified to 3-hydroxyproline. 16 positions are modified to 4-hydroxyproline: proline 875, proline 884, proline 887, proline 908, proline 917, proline 926, proline 935, proline 953, proline 962, proline 965, proline 971, proline 986, proline 992, proline 998, proline 1007, and proline 1013. A compositionally biased stretch (low complexity) spans 901-910 (ETGPAGRPGE). Residues 920–935 (AGEKGSPGADGPAGSP) show a composition bias toward low complexity. Positions 985 to 995 (PPGPMGPPGLA) are enriched in pro residues. The segment covering 997–1012 (PPGESGREGSPGAEGS) has biased composition (low complexity). 5-hydroxylysine is present on lysine 1022. Residues 1031–1046 (AGPPGAPGAPGAPGPV) are compositionally biased toward pro residues. 3 positions are modified to 4-hydroxyproline: proline 1034, proline 1037, and proline 1040. The segment covering 1067 to 1081 (IGPAGARGPAGPQGP) has biased composition (low complexity). The Cell attachment site signature appears at 1082-1084 (RGD). Positions 1082–1096 (RGDKGETGEQGDRGI) are enriched in basic and acidic residues. Lysine 1085 is subject to 5-hydroxylysine. At lysine 1097 the chain carries 5-hydroxylysine; alternate. The O-linked (Gal...) hydroxylysine; alternate glycan is linked to lysine 1097. A compositionally biased stretch (low complexity) spans 1102 to 1148 (FSGLQGPPGSPGSPGEQGPSGASGPAGPRGPPGSAGSPGKDGLNGLP). 4-hydroxyproline is present on residues proline 1109, proline 1112, proline 1115, proline 1133, and proline 1148. The residue at position 1153 (proline 1153) is a 3-hydroxyproline. Proline 1154 is subject to 4-hydroxyproline. The span at 1166-1181 (AGPPGPPGPPGPPGPP) shows a compositional bias: pro residues. Proline 1168 carries the 3-hydroxyproline modification. A 4-hydroxyproline modification is found at proline 1169. Proline 1171 carries the post-translational modification 3-hydroxyproline. Position 1172 is a 4-hydroxyproline (proline 1172). Proline 1174 is subject to 3-hydroxyproline. 3 positions are modified to 4-hydroxyproline: proline 1175, proline 1178, and proline 1181. Residues 1176-1186 (GPPGPPSGGYD) form a major antigenic determinant (of neutral salt-extracted rat skin collagen) region. The nonhelical region (C-terminal) stretch occupies residues 1182–1207 (SGGYDFSFLPQPPQEKSQDGGRYYRA). Allysine is present on lysine 1197. The span at 1197–1206 (KSQDGGRYYR) shows a compositional bias: basic and acidic residues. Residues 1208 to 1453 (DDANVVRDRD…GMDIGPACFV (246 aa)) constitute a propeptide, C-terminal propeptide. Residues 1218–1453 (LEVDTTLKSL…GMDIGPACFV (236 aa)) form the Fibrillar collagen NC1 domain. Cystine bridges form between cysteine 1248/cysteine 1280, cysteine 1288/cysteine 1451, and cysteine 1359/cysteine 1404. Ca(2+) contacts are provided by aspartate 1266, asparagine 1268, glutamine 1269, cysteine 1271, and aspartate 1274. Asparagine 1354 carries N-linked (GlcNAc...) asparagine glycosylation.

It belongs to the fibrillar collagen family. Trimers of one alpha 2(I) and two alpha 1(I) chains. Interacts with MRC2. Interacts with TRAM2. Interacts with MFAP4 in a Ca (2+)-dependent manner. In terms of processing, contains mostly 4-hydroxyproline. Proline residues at the third position of the tripeptide repeating unit (G-X-Y) are hydroxylated in some or all of the chains. Post-translationally, contains 3-hydroxyproline at a few sites. This modification occurs on the first proline residue in the sequence motif Gly-Pro-Hyp, where Hyp is 4-hydroxyproline. Lysine residues at the third position of the tripeptide repeating unit (G-X-Y) are 5-hydroxylated in some or all of the chains. In terms of processing, O-glycosylated on hydroxylated lysine residues. The O-linked glycan consists of a Glc-Gal disaccharide. As to expression, forms the fibrils of tendon, ligaments and bones. In bones the fibrils are mineralized with calcium hydroxyapatite.

The protein localises to the secreted. It localises to the extracellular space. It is found in the extracellular matrix. Its function is as follows. Type I collagen is a member of group I collagen (fibrillar forming collagen). This is Collagen alpha-1(I) chain (Col1a1) from Rattus norvegicus (Rat).